The following is a 532-amino-acid chain: Monolignol oxidoreductase AtBBE-like 15 (532 aa).

A signal peptide spans 1 to 27; that stretch reads MAFAISKRNATLFLVTLLLISVPLSSS. Cysteines 36 and 100 form a disulfide. N-linked (GlcNAc...) asparagine glycosylation occurs at Asn-57. The FAD-binding PCMH-type domain occupies 76–254; the sequence is TPSNPKPVFI…LAWKIKLVPV (179 aa). Positions 115–179 form a cross-link, 6-(S-cysteinyl)-8alpha-(pros-histidyl)-FAD (His-Cys); that stretch reads HDYEGLSFVA…QTHGFPAGLC (65 aa). Residues Asn-306 and Asn-431 are each glycosylated (N-linked (GlcNAc...) asparagine).

Belongs to the oxygen-dependent FAD-linked oxidoreductase family. Requires FAD as cofactor. The FAD cofactor is bound via a bicovalent 6-S-cysteinyl, 8alpha-N1-histidyl FAD linkage. In terms of tissue distribution, expressed in sepals and stamen.

The protein resides in the secreted. It is found in the cell wall. It catalyses the reaction (E)-4-coumaroyl alcohol + A = (E)-4-coumaraldehyde + AH2. The enzyme catalyses (E)-coniferol + A = (E)-coniferaldehyde + AH2. The catalysed reaction is (E)-sinapyl alcohol + A = (E)-sinapaldehyde + AH2. It carries out the reaction 4-O-(beta-D-glucosyl)-(E)-coniferol + A = 4-O-(beta-D-glucosyl)-4-(E)-coniferyl aldehyde + AH2. In terms of biological role, required for endosperm development and polar nuclei fusion. Mediates oxidation of p-hydroxylated derivatives of cinnamyl alcohol (i.e. the monolignols p-coumaryl-, coniferyl-, and sinapyl alcohol) to their corresponding aldehydes. Can also use the beta-O-glycosylated form of coniferyl alcohol (coniferin) as substrate, but is much less efficient towards cinnamyl alcohol. The electron acceptor required for these reactions is not known, but does not seem to be dioxygen. In Arabidopsis thaliana (Mouse-ear cress), this protein is Monolignol oxidoreductase AtBBE-like 15.